A 257-amino-acid chain; its full sequence is Adenylate kinase (257 aa).

Position 52–57 (52–57 (GAGKGT)) interacts with ATP. The interval 72 to 101 (ATGDMLRSQVAKKTELGKEAKKIMDQGGLV) is NMP. AMP is bound by residues T73, R78, 99–101 (GLV), 128–131 (GFPR), and Q135. Positions 169 to 206 (GRLVHPASGRSYHKIFNPPKNEMLDDITGEPLIQRSDD) are LID. ATP-binding positions include R170 and 179 to 180 (SY). The AMP site is built by R203 and R214. ATP is bound at residue Q242.

The protein belongs to the adenylate kinase family. AK2 subfamily. In terms of assembly, monomer.

Its subcellular location is the cytoplasm. It localises to the cytosol. It is found in the mitochondrion intermembrane space. The catalysed reaction is AMP + ATP = 2 ADP. Functionally, catalyzes the reversible transfer of the terminal phosphate group between ATP and AMP. Plays an important role in cellular energy homeostasis and in adenine nucleotide metabolism. Adenylate kinase activity is critical for regulation of the phosphate utilization and the AMP de novo biosynthesis pathways. This chain is Adenylate kinase (adk1), found in Aspergillus clavatus (strain ATCC 1007 / CBS 513.65 / DSM 816 / NCTC 3887 / NRRL 1 / QM 1276 / 107).